The primary structure comprises 1072 residues: RIMS-binding protein 2 (1072 aa).

One can recognise an SH3 1 domain in the interval 181 to 248; sequence GKVHLCVARY…PSNFVDFIQD (68 aa). 3 consecutive Fibronectin type-III domains span residues 311 to 404, 407 to 489, and 503 to 604; these read VPYP…GKDV, APSQ…KKEA, and PPQD…VPPA. Disordered stretches follow at residues 597–681 and 713–800; these read PDLL…APVS and SAGQ…TSHN. Residues 599-615 are compositionally biased toward pro residues; that stretch reads LLVPPAPHPRTAPPPKP. The segment covering 620-635 has biased composition (basic and acidic residues); the sequence is MDTKDQHLGPHVKVDE. A compositionally biased stretch (low complexity) spans 660–670; sequence GPGRRSPSPSR. Residues Ser-720 and Ser-728 each carry the phosphoserine modification. 2 stretches are compositionally biased toward basic and acidic residues: residues 730 to 743 and 754 to 765; these read EVKRRGTSVDDFLK and CHGDEYHTESSR. Over residues 771 to 781 the composition is skewed to acidic residues; sequence DIMEEDEEELY. A phosphoserine mark is found at Ser-852 and Ser-859. Residue Thr-861 is modified to Phosphothreonine. SH3 domains are found at residues 868-936 and 972-1039; these read LPAR…EIHA and VPTR…EVPD. The tract at residues 1044-1072 is disordered; sequence HLSDAPPHYSHDPPMRSKAKRKKSVHFTP. Over residues 1060-1072 the composition is skewed to basic residues; it reads SKAKRKKSVHFTP.

Belongs to the RIMBP family. Interacts with RIMS1, RIMS2, CACNA1D and CACNA1B, and potentially with other Ca(2+) channel alpha-1 isoforms.

Its subcellular location is the cell membrane. The protein resides in the synapse. In terms of biological role, plays a role in the synaptic transmission as bifunctional linker that interacts simultaneously with RIMS1, RIMS2, CACNA1D and CACNA1B. This is RIMS-binding protein 2 (Rimbp2) from Mus musculus (Mouse).